Here is a 335-residue protein sequence, read N- to C-terminus: Tryptophan--tRNA ligase (335 aa).

Residues Gln19 to Ser21 and Gly28 to Asn29 contribute to the ATP site. The 'HIGH' region motif lies at Pro20–Asn29. Asp143 is a binding site for L-tryptophan. ATP contacts are provided by residues Gly155–Asp157, Ile192, and Lys201–Ser205. Positions Lys201–Ser205 match the 'KMSKS' region motif.

This sequence belongs to the class-I aminoacyl-tRNA synthetase family. Homodimer.

It localises to the cytoplasm. It carries out the reaction tRNA(Trp) + L-tryptophan + ATP = L-tryptophyl-tRNA(Trp) + AMP + diphosphate + H(+). Functionally, catalyzes the attachment of tryptophan to tRNA(Trp). In Tropheryma whipplei (strain Twist) (Whipple's bacillus), this protein is Tryptophan--tRNA ligase.